We begin with the raw amino-acid sequence, 254 residues long: tRNA (guanine-N(7)-)-methyltransferase (254 aa).

Residues M1–L11 are compositionally biased toward basic and acidic residues. Residues M1–N25 form a disordered region. Residues E83, E108, D135, and D158 each coordinate S-adenosyl-L-methionine. D158 is a catalytic residue. A substrate-binding site is contributed by K162. An interaction with RNA region spans residues R164–R169. Substrate-binding positions include D194 and T232 to E235.

Belongs to the class I-like SAM-binding methyltransferase superfamily. TrmB family.

The enzyme catalyses guanosine(46) in tRNA + S-adenosyl-L-methionine = N(7)-methylguanosine(46) in tRNA + S-adenosyl-L-homocysteine. Its pathway is tRNA modification; N(7)-methylguanine-tRNA biosynthesis. In terms of biological role, catalyzes the formation of N(7)-methylguanine at position 46 (m7G46) in tRNA. This is tRNA (guanine-N(7)-)-methyltransferase from Corynebacterium efficiens (strain DSM 44549 / YS-314 / AJ 12310 / JCM 11189 / NBRC 100395).